We begin with the raw amino-acid sequence, 321 residues long: Transaldolase (321 aa).

Catalysis depends on K132, which acts as the Schiff-base intermediate with substrate.

Belongs to the transaldolase family. Type 1 subfamily. In terms of assembly, homodimer.

It localises to the cytoplasm. The enzyme catalyses D-sedoheptulose 7-phosphate + D-glyceraldehyde 3-phosphate = D-erythrose 4-phosphate + beta-D-fructose 6-phosphate. Its pathway is carbohydrate degradation; pentose phosphate pathway; D-glyceraldehyde 3-phosphate and beta-D-fructose 6-phosphate from D-ribose 5-phosphate and D-xylulose 5-phosphate (non-oxidative stage): step 2/3. In terms of biological role, transaldolase is important for the balance of metabolites in the pentose-phosphate pathway. The polypeptide is Transaldolase (Agrobacterium fabrum (strain C58 / ATCC 33970) (Agrobacterium tumefaciens (strain C58))).